A 325-amino-acid polypeptide reads, in one-letter code: Thiamine-monophosphate kinase (325 aa).

The Mg(2+) site is built by aspartate 30, serine 45, threonine 46, and aspartate 47. A substrate-binding site is contributed by histidine 54. Mg(2+) is bound by residues aspartate 75 and aspartate 122. ATP-binding positions include 121-122 (GD) and arginine 146. Mg(2+) is bound at residue aspartate 212. Serine 214 is an ATP binding site. Aspartate 215 contacts Mg(2+). Substrate is bound by residues glutamate 263 and tyrosine 319.

It belongs to the thiamine-monophosphate kinase family.

The enzyme catalyses thiamine phosphate + ATP = thiamine diphosphate + ADP. The protein operates within cofactor biosynthesis; thiamine diphosphate biosynthesis; thiamine diphosphate from thiamine phosphate: step 1/1. Its function is as follows. Catalyzes the ATP-dependent phosphorylation of thiamine-monophosphate (TMP) to form thiamine-pyrophosphate (TPP), the active form of vitamin B1. This Salmonella typhimurium (strain LT2 / SGSC1412 / ATCC 700720) protein is Thiamine-monophosphate kinase (thiL).